The sequence spans 1115 residues: DNA-directed RNA polymerase subunit beta (1115 aa).

The interval 1084 to 1115 (HEAGEGEDDEYFEEDEEAVDDEPMTFDDDDME) is disordered. Residues 1088–1115 (EGEDDEYFEEDEEAVDDEPMTFDDDDME) show a composition bias toward acidic residues.

It belongs to the RNA polymerase beta chain family. The RNAP catalytic core consists of 2 alpha, 1 beta, 1 beta' and 1 omega subunit. When a sigma factor is associated with the core the holoenzyme is formed, which can initiate transcription.

It carries out the reaction RNA(n) + a ribonucleoside 5'-triphosphate = RNA(n+1) + diphosphate. DNA-dependent RNA polymerase catalyzes the transcription of DNA into RNA using the four ribonucleoside triphosphates as substrates. The protein is DNA-directed RNA polymerase subunit beta of Desulfitobacterium hafniense (strain Y51).